We begin with the raw amino-acid sequence, 385 residues long: 1-deoxy-D-xylulose 5-phosphate reductoisomerase (385 aa).

Positions 10, 11, 12, 13, 37, and 124 each coordinate NADPH. A 1-deoxy-D-xylulose 5-phosphate-binding site is contributed by Lys-125. Glu-126 lines the NADPH pocket. Asp-150 serves as a coordination point for Mn(2+). 4 residues coordinate 1-deoxy-D-xylulose 5-phosphate: Ser-151, Glu-152, Ser-176, and His-199. Glu-152 is a Mn(2+) binding site. Residue Gly-205 coordinates NADPH. 4 residues coordinate 1-deoxy-D-xylulose 5-phosphate: Ser-212, Asn-217, Lys-218, and Glu-221. Position 221 (Glu-221) interacts with Mn(2+).

Belongs to the DXR family. It depends on Mg(2+) as a cofactor. Mn(2+) is required as a cofactor.

The catalysed reaction is 2-C-methyl-D-erythritol 4-phosphate + NADP(+) = 1-deoxy-D-xylulose 5-phosphate + NADPH + H(+). The protein operates within isoprenoid biosynthesis; isopentenyl diphosphate biosynthesis via DXP pathway; isopentenyl diphosphate from 1-deoxy-D-xylulose 5-phosphate: step 1/6. In terms of biological role, catalyzes the NADPH-dependent rearrangement and reduction of 1-deoxy-D-xylulose-5-phosphate (DXP) to 2-C-methyl-D-erythritol 4-phosphate (MEP). In Clostridium botulinum (strain 657 / Type Ba4), this protein is 1-deoxy-D-xylulose 5-phosphate reductoisomerase.